The sequence spans 452 residues: UDP-N-acetylmuramoylalanine--D-glutamate ligase (452 aa).

Position 113–119 (113–119) interacts with ATP; that stretch reads GTNGKTT.

It belongs to the MurCDEF family.

It is found in the cytoplasm. It carries out the reaction UDP-N-acetyl-alpha-D-muramoyl-L-alanine + D-glutamate + ATP = UDP-N-acetyl-alpha-D-muramoyl-L-alanyl-D-glutamate + ADP + phosphate + H(+). The protein operates within cell wall biogenesis; peptidoglycan biosynthesis. Functionally, cell wall formation. Catalyzes the addition of glutamate to the nucleotide precursor UDP-N-acetylmuramoyl-L-alanine (UMA). This Synechocystis sp. (strain ATCC 27184 / PCC 6803 / Kazusa) protein is UDP-N-acetylmuramoylalanine--D-glutamate ligase (murD).